Consider the following 375-residue polypeptide: N-acetylneuraminate epimerase (375 aa).

The N-terminal stretch at 1–22 is a signal peptide; the sequence is MKLTKTALCTALFATFTFSANA. Kelch repeat units lie at residues 43-87, 89-140, 142-176, 177-222, 225-273, 295-344, and 346-375; these read TVYV…AAVD, KLYV…ASHG, KVYI…EIVA, AYFD…TIQG, LVVV…LAGA, KQFK…SYNN, and VLLI…LTVE. Glu231 functions as the Proton acceptor in the catalytic mechanism.

The protein belongs to the NanM family. As to quaternary structure, homodimer.

The protein resides in the periplasm. The enzyme catalyses N-acetyl-alpha-neuraminate = N-acetyl-beta-neuraminate. Its function is as follows. Converts alpha-N-acetylneuranimic acid (Neu5Ac) to the beta-anomer, accelerating the equilibrium between the alpha- and beta-anomers. Probably facilitates sialidase-negative bacteria to compete successfully for limited amounts of extracellular Neu5Ac, which is likely taken up in the beta-anomer. In addition, the rapid removal of sialic acid from solution might be advantageous to the bacterium to damp down host responses. This is N-acetylneuraminate epimerase from Haemophilus influenzae (strain 86-028NP).